Here is a 187-residue protein sequence, read N- to C-terminus: Abscisic acid receptor PYL9 (187 aa).

The interval 27–178 (HLCRENQCTS…NLKSLADVSE (152 aa)) is START-like. 2 disulfide bridges follow: Cys-29–Cys-159 and Cys-34–Cys-159. Abscisate contacts are provided by residues Lys-63, 91-96 (ATTSTE), 118-124 (RLKNYSS), and Glu-143. Positions 87–91 (SGLPA) match the Gate loop motif. Residues 117-119 (HRL) carry the Latch loop motif.

This sequence belongs to the PYR/PYL/RCAR abscisic acid intracellular receptor family. In terms of assembly, homodimer. Monomer. Binds ABA on one subunit only. Binds to CARs protein in an ABA-independent manner, both at the plasma membrane and in the nucleus. Binds specifically (+)-ABA but not (-)-ABA. Interacts with HAB1, ABI1 and ABI2, and possibly with other PP2Cs. Interacts with TOPP1. Interacts with DDA1. In terms of tissue distribution, expressed in root tips, vascular tissues, stomata, flowers, pollen tubes and developing seeds.

The protein localises to the cytoplasm. It localises to the nucleus. It is found in the cell membrane. In terms of biological role, receptor for abscisic acid (ABA) required for ABA-mediated responses such as stomatal closure and germination inhibition. Inhibits the activity of group-A protein phosphatases type 2C (PP2Cs) in an ABA-independent manner but more efficiently when activated by ABA. Confers enhanced sensitivity to ABA. Can be activated only by (+)-ABA but not by (-)-ABA. The protein is Abscisic acid receptor PYL9 (PYL9) of Arabidopsis thaliana (Mouse-ear cress).